The chain runs to 448 residues: Phosphoglucosamine mutase (448 aa).

The active-site Phosphoserine intermediate is the Ser-100. Positions 100, 240, 242, and 244 each coordinate Mg(2+). Ser-100 bears the Phosphoserine mark.

It belongs to the phosphohexose mutase family. Mg(2+) serves as cofactor. In terms of processing, activated by phosphorylation.

It catalyses the reaction alpha-D-glucosamine 1-phosphate = D-glucosamine 6-phosphate. Its function is as follows. Catalyzes the conversion of glucosamine-6-phosphate to glucosamine-1-phosphate. The chain is Phosphoglucosamine mutase from Clostridium perfringens (strain SM101 / Type A).